The following is a 254-amino-acid chain: Zinc finger FYVE domain-containing protein 21 (254 aa).

The FYVE-type zinc finger occupies D44–R104. Zn(2+) contacts are provided by C50, C53, C66, C69, C74, C77, C96, and C99. The PH-like stretch occupies residues A107 to Q254.

As to quaternary structure, interacts with PTK2/FAK1.

The protein resides in the cell junction. It is found in the focal adhesion. The protein localises to the cytoplasmic vesicle. It localises to the endosome. Functionally, plays a role in cell adhesion, and thereby in cell motility which requires repeated formation and disassembly of focal adhesions. Regulates microtubule-induced PTK2/FAK1 dephosphorylation, an event important for focal adhesion disassembly, as well as integrin beta-1/ITGB1 cell surface expression. The sequence is that of Zinc finger FYVE domain-containing protein 21 (ZFYVE21) from Bos taurus (Bovine).